The chain runs to 356 residues: Serendipity locus protein beta (356 aa).

The C2H2-type 1; degenerate zinc-finger motif lies at 171–193 (IPCHICGEMFSSQEVLERHIKAD). 5 C2H2-type zinc fingers span residues 201 to 223 (ATCN…MNLH), 229 to 251 (LECR…MEVH), 257 to 279 (YQCD…LMRH), 286 to 308 (LICE…LRTH), and 315 to 337 (YPCP…KRVH).

As to quaternary structure, binds chromatin; requires N-terminal regions to form protein-protein contacts, in addition to DNA specific recognition by the zinc fingers.

Its subcellular location is the nucleus. Functionally, binds to the consensus DNA sequence 5'-YCAGAGATGCGCA-3'. The protein is Serendipity locus protein beta (Sry-beta) of Drosophila melanogaster (Fruit fly).